We begin with the raw amino-acid sequence, 316 residues long: Retinol dehydrogenase 7 (316 aa).

NADP(+) is bound at residue 33–57 (FITGCDSGFGNLLARQLDRRGMRVL). S163 is a binding site for substrate. Y175 functions as the Proton acceptor in the catalytic mechanism.

Belongs to the short-chain dehydrogenases/reductases (SDR) family. In terms of tissue distribution, highly expressed in liver. Also expressed in lung, eye, kidney, and brain.

The protein localises to the microsome. Its subcellular location is the endoplasmic reticulum. It carries out the reaction all-trans-retinol--[retinol-binding protein] + NAD(+) = all-trans-retinal--[retinol-binding protein] + NADH + H(+). It functions in the pathway cofactor metabolism; retinol metabolism. In terms of biological role, acts on androgens and retinols, i.e. has steroid 3-alpha- and 17-beta-dehydrogenase and cis/trans-retinol catalytic activities. This is Retinol dehydrogenase 7 (Rdh7) from Mus musculus (Mouse).